Here is a 671-residue protein sequence, read N- to C-terminus: Probable boron transporter 6 (671 aa).

The Cytoplasmic segment spans residues 1-37 (MKSEGESGPFQGILRDIEGRRKCYKQDWIRGIKTGIR). The chain crosses the membrane as a helical span at residues 38–58 (ILAPTCYIFFASSLPVVAFGE). The Extracellular portion of the chain corresponds to 59–77 (QLSKHTGGALSAVETLAST). Residues 78–98 (SICGIIHAIFGGQPLLIVGVA) traverse the membrane as a helical segment. Residues 99-123 (EPTIIMYTYLYSFCISRPDIGRELY) lie on the Cytoplasmic side of the membrane. Residues 124–144 (LAWVAWVCVWTSVLLILLSIF) form a helical membrane-spanning segment. The Extracellular portion of the chain corresponds to 145-157 (NAGTIITRFTRIA). A helical membrane pass occupies residues 158–178 (GELFGMLIAVLFLQEAIKGLI). Residues 179 to 195 (SEFHAPEIKNQETGKSH) are Cytoplasmic-facing. The helical transmembrane segment at 196-216 (FLLIYANGLLAVIFSLGLLIT) threads the bilayer. Residues 217-235 (ALKSRRAKSWKYGFGWLRS) lie on the Extracellular side of the membrane. The helical transmembrane segment at 236–256 (FIGDYGVPLMVLLWTALSYTV) threads the bilayer. Residues 257–291 (PSEVLPSVPRRLFCPLPWEPASLYHWTVVKDMGKV) are Cytoplasmic-facing. A helical membrane pass occupies residues 292-312 (PIMYILAAFIPGVMIAGLYFF). Residues 313 to 332 (DHSVASQMAQQKEFNLKNPS) lie on the Extracellular side of the membrane. A helical transmembrane segment spans residues 333 to 353 (AYHYDIFLLGIITLICGLLGL). The Cytoplasmic segment spans residues 354–469 (PPSNGVLPQA…EQRVSNLLQS (116 aa)). Residues 470–490 (VLVGLTLLAVTVIKMIPSSVL) form a helical membrane-spanning segment. Over 491-557 (WGYFAYMAID…QLVYFLLCYG (67 aa)) the chain is Extracellular. Residues 558–578 (MTWIPMAGIFFPALFFLLISI) form a helical membrane-spanning segment. Residues 579–671 (REHLLPKLFD…EEKHVTFEPH (93 aa)) are Cytoplasmic-facing.

The protein belongs to the anion exchanger (TC 2.A.31.3) family.

The protein localises to the membrane. Probable boron transporter. Boron is essential for maintaining the integrity of plants cell walls. This chain is Probable boron transporter 6 (BOR6), found in Arabidopsis thaliana (Mouse-ear cress).